A 72-amino-acid chain; its full sequence is Heat-stable enterotoxin C (72 aa).

The N-terminal stretch at 1-19 (MKKIVFVLTLMLFSFGTLG) is a signal peptide. 3 disulfide bridges follow: cysteine 60–cysteine 65, cysteine 61–cysteine 69, and cysteine 64–cysteine 72.

The protein belongs to the heat-stable enterotoxin family.

The protein localises to the secreted. Its function is as follows. Toxin which activates the particulate form of guanylate cyclase and increases cyclic GMP levels within the host intestinal epithelial cells. Highly toxic. The sequence is that of Heat-stable enterotoxin C (ystC) from Yersinia enterocolitica.